Consider the following 805-residue polypeptide: Leucine--tRNA ligase (805 aa).

Positions 40–51 (PYPSGAGLHVGH) match the 'HIGH' region motif. Residues 576 to 580 (KMSKS) carry the 'KMSKS' region motif. Lys579 is an ATP binding site.

Belongs to the class-I aminoacyl-tRNA synthetase family.

Its subcellular location is the cytoplasm. It catalyses the reaction tRNA(Leu) + L-leucine + ATP = L-leucyl-tRNA(Leu) + AMP + diphosphate. The chain is Leucine--tRNA ligase from Anoxybacillus flavithermus (strain DSM 21510 / WK1).